A 308-amino-acid polypeptide reads, in one-letter code: Elongation factor Ts (308 aa).

The tract at residues 80–83 (TDFV) is involved in Mg(2+) ion dislocation from EF-Tu.

The protein belongs to the EF-Ts family.

Its subcellular location is the cytoplasm. In terms of biological role, associates with the EF-Tu.GDP complex and induces the exchange of GDP to GTP. It remains bound to the aminoacyl-tRNA.EF-Tu.GTP complex up to the GTP hydrolysis stage on the ribosome. The polypeptide is Elongation factor Ts (Methylobacterium radiotolerans (strain ATCC 27329 / DSM 1819 / JCM 2831 / NBRC 15690 / NCIMB 10815 / 0-1)).